The chain runs to 596 residues: Elongation factor 4 (596 aa).

Residues 2–183 (ENIRNFCIIA…AIIQRIPPPK (182 aa)) enclose the tr-type G domain. GTP is bound by residues 14 to 19 (DHGKST) and 130 to 133 (NKID).

The protein belongs to the TRAFAC class translation factor GTPase superfamily. Classic translation factor GTPase family. LepA subfamily.

It is found in the cell inner membrane. The enzyme catalyses GTP + H2O = GDP + phosphate + H(+). Its function is as follows. Required for accurate and efficient protein synthesis under certain stress conditions. May act as a fidelity factor of the translation reaction, by catalyzing a one-codon backward translocation of tRNAs on improperly translocated ribosomes. Back-translocation proceeds from a post-translocation (POST) complex to a pre-translocation (PRE) complex, thus giving elongation factor G a second chance to translocate the tRNAs correctly. Binds to ribosomes in a GTP-dependent manner. This Cytophaga hutchinsonii (strain ATCC 33406 / DSM 1761 / CIP 103989 / NBRC 15051 / NCIMB 9469 / D465) protein is Elongation factor 4.